We begin with the raw amino-acid sequence, 257 residues long: THAP domain-containing protein 10 (257 aa).

The THAP-type zinc-finger motif lies at 1 to 90; sequence MPARCVAAHC…LVAGAVPTLH (90 aa). Polar residues predominate over residues 154–168; it reads QPHADNPSNTVTSVP. The disordered stretch occupies residues 154 to 178; that stretch reads QPHADNPSNTVTSVPTHCEEGPVHK.

The sequence is that of THAP domain-containing protein 10 (THAP10) from Homo sapiens (Human).